The chain runs to 314 residues: Acetaldehyde dehydrogenase 2 (314 aa).

Residue 11–14 (SGNI) participates in NAD(+) binding. The active-site Acyl-thioester intermediate is cysteine 129. NAD(+) contacts are provided by residues 160–168 (SAGPGTRAN) and asparagine 291.

The protein belongs to the acetaldehyde dehydrogenase family.

It carries out the reaction acetaldehyde + NAD(+) + CoA = acetyl-CoA + NADH + H(+). The chain is Acetaldehyde dehydrogenase 2 from Rhodococcus erythropolis (strain PR4 / NBRC 100887).